A 405-amino-acid chain; its full sequence is N-methyltransferase nanE (405 aa).

S-adenosyl-L-methionine contacts are provided by residues 238–239 (GG), Asp-261, and 290–291 (HH).

It belongs to the class I-like SAM-binding methyltransferase superfamily. Cation-independent O-methyltransferase family.

It participates in secondary metabolite biosynthesis. N-methyltransferase; part of the gene cluster that mediates the biosynthesis of the benzazepine alkaloid nanangelenin A which contains an unprecedented 3,4-dihydro-1-benzazepine-2,5-dione-N-prenyl-N-acetoxy-anthranilamide scaffold. The first step of nanangelenin biosynthesis is catalyzed by the indoleamine 2,3-dioxygenase nanC which produces N-formyl-kynurenine through the catabolism of tryptophan. The two-module NRPS nanA then utilizes anthranilate (Ant) and L-kynurenine (L-Kyn) to assemble the dipeptide product nanangelenin B. The first adenylation domain of nanA (A1) loads anthranilate onto the T1 domain, while A2 loads kynurenine, generated through spontaneous nonenzymatic deformylation of the nanC-supplied N-formyl-kynurenine. The peptide bond formation between the tethered amino acids is catalyzed by the first condensation domain (C1) between anthranilate's carbonyl carbon and kynurenine's aliphatic primary amine. The second C domain (C2) catalyzes the final cyclization event between the aromatic amine of kynurenine and the tethered carbonyl carbon, yielding nanangelenin B. The terminal T3 domain enhances the catalytic efficiency of C2, suggesting the T2-tethered Ant-L-Kyn is transferred to T3 prior to cyclization by C2. Once released from nanA, nanangelenin B is then prenylated by the prenyltransferase nanD to form nanangelenin C. Nanangelenin C is then N-hydroxylated by the FAD-dependent monooxygenase nanF and further acetylated by the acetyltransferase nanB to yield nanangelenin F. Finally, the N-methyltransferase nanE methylates the amide nitrogen of 1-benzazepine to convert nanangelenin F into nanangelenin A. NanE is also able to methylate most of the intermediates of the pathway such as nanangelenin B and nanangelenin C to produce nanangelenin D and nanangelenin E, respectively. The chain is N-methyltransferase nanE from Aspergillus nanangensis.